A 930-amino-acid chain; its full sequence is MGGSCAQRRRAGPRQVLFPLLLPFFYPTLCEPIRYSIPEELAKGSVVGNLAKDLGLSVLDVSARKLRVSAEKLHFSVDAESGDLLVKNRIDREQICKERRRCELQLEAVVENPLNIFHVIVVIEDVNDHAPQFDKKEIHLEIFESASAGTRLSLDPATDPDININSIKDYKINSNPYFSLMVRVNSDGGKYPELSLEKLLDREEQRSHSLILTALDGGDPPRSATAHIEISVKDTNDNPPVFSRDEYRISLSENLPPGSPVLQVTATDQDEGVNAEINYYFRSTAQSTKHMFSLDEKTGMIKNNQSFDFEDVERYTMEVEAKDGGGLSTQCKVIIEILDENDNSPEIIITSLSDQILENSPPGMVVALFKTRDLDFGGNGEVRCNIETDIPFKIYSSSNHYYKLVTDGALDREQTPEYNVTIVATDRGKPPLSSSRSITLYVADINDNAPVFDQTSYVVHVAENNPPGASIAQVSASDPDLGLNGHISYSIVASDLEPLAVSSYVSVSAQSGVVFAQRAFDHEQLRAFALTLQARDHGSPTLSANVSLRVLVGDRNDNAPRVLYPALGPDGSAFFDMVPRSAEPGYLVTKVVAVDADSGHNAWLSYHVLQASEPGLFSLGLRTGEVRTARALGDRDAARQRLLVAVRDGGQPPLSATATLHLVFADNLQEILPDLSDRPVLSDPQAELQFYLVVALALISVLFLLAVILAIALRLRRSLSPTTWDCFHPGLCVKSGPVVPPNYSEGTLPYSYNLCIAHTGTKEFNFLKCSVPLHSNEDMVCSVSPGALIPPHGGEDLTSHPETLTSQAPPNTDWRFSQAQRPGTSGSQNGDDTGTWPNNQFDTEMLQAMILASASEAADGSSTLGGGAGTMGLSARYGPQFTLQHVPDYRQNVYIPGSNATLTNAAGKRDGKAPAGGNGNKKKSGKKEKK.

Residues 1 to 30 (MGGSCAQRRRAGPRQVLFPLLLPFFYPTLC) form the signal peptide. 6 Cadherin domains span residues 31–133 (EPIR…APQF), 134–242 (DKKE…PPVF), 243–347 (SRDE…SPEI), 348–452 (IITS…APVF), 453–562 (DQTS…APRV), and 570–675 (DGSA…LPDL). Over 31-691 (EPIRYSIPEE…SDPQAELQFY (661 aa)) the chain is Extracellular. N-linked (GlcNAc...) asparagine glycans are attached at residues Asn-304, Asn-419, and Asn-545. Residues 692–712 (LVVALALISVLFLLAVILAIA) form a helical membrane-spanning segment. Topologically, residues 713-930 (LRLRRSLSPT…KKKSGKKEKK (218 aa)) are cytoplasmic. Disordered regions lie at residues 791–839 (PHGG…WPNN) and 900–930 (ATLT…KEKK). The segment covering 800–839 (HPETLTSQAPPNTDWRFSQAQRPGTSGSQNGDDTGTWPNN) has biased composition (polar residues). Positions 920-930 (NKKKSGKKEKK) are enriched in basic residues.

It is found in the cell membrane. Potential calcium-dependent cell-adhesion protein. May be involved in the establishment and maintenance of specific neuronal connections in the brain. The polypeptide is Protocadherin gamma-B6 (PCDHGB6) (Pan troglodytes (Chimpanzee)).